Here is a 1009-residue protein sequence, read N- to C-terminus: DENN domain-containing protein 2A (1009 aa).

Disordered regions lie at residues 15 to 153 (AEAS…LRFQ), 171 to 334 (KDGS…HRKS), 434 to 479 (KLLD…KKRK), and 498 to 532 (KRVK…LKAH). 4 stretches are compositionally biased toward basic and acidic residues: residues 45–59 (NIKD…KKEV), 130–147 (QPER…EPRL), 218–247 (HPSD…DRSL), and 275–284 (HAGEGDKDGK). Residues 297–314 (PPLPSLPPPPLPSSPPPS) are compositionally biased toward pro residues. The span at 434–443 (KLLDTRKLSR) shows a compositional bias: basic and acidic residues. Over residues 503–513 (LSQSMESNSGK) the composition is skewed to polar residues. Ser-551 carries the post-translational modification Phosphoserine. Residues 566–715 (EYFVVVSLHK…PFPALGKTIL (150 aa)) enclose the uDENN domain. The region spanning 737-870 (RLEHVDFESL…LQVALEHILE (134 aa)) is the cDENN domain. The 98-residue stretch at 872–969 (RNELACEQDE…QERELRRQDA (98 aa)) folds into the dDENN domain.

Its subcellular location is the cytoplasm. It localises to the cytoskeleton. Functionally, guanine nucleotide exchange factor (GEF) which may activate RAB9A and RAB9B. Promotes the exchange of GDP to GTP, converting inactive GDP-bound Rab proteins into their active GTP-bound form. May play a role in late endosomes back to trans-Golgi network/TGN transport. The sequence is that of DENN domain-containing protein 2A (DENND2A) from Homo sapiens (Human).